A 367-amino-acid polypeptide reads, in one-letter code: Inositol-3-phosphate synthase (367 aa).

NAD(+)-binding residues include D78, A137, Y157, S200, D235, and K248.

Belongs to the myo-inositol 1-phosphate synthase family. It depends on NAD(+) as a cofactor.

It catalyses the reaction D-glucose 6-phosphate = 1D-myo-inositol 3-phosphate. Its function is as follows. Key enzyme in myo-inositol biosynthesis pathway that catalyzes the conversion of glucose 6-phosphate to 1D-myo-inositol 3-phosphate in a NAD-dependent manner. The polypeptide is Inositol-3-phosphate synthase (ino1) (Mycobacterium tuberculosis (strain CDC 1551 / Oshkosh)).